The chain runs to 75 residues: Parvalbumin beta 3 (75 aa).

The residue at position 1 (A1) is an N-acetylalanine. Residues 26 to 61 enclose the EF-hand domain; sequence YKAFFAKKAFFVIDQDKSGFIEEDELKLFLQVFSAG. D39, D41, S43, F45, E47, and E50 together coordinate Ca(2+).

Belongs to the parvalbumin family.

In terms of biological role, in muscle, parvalbumin is thought to be involved in relaxation after contraction. It binds two calcium ions. The sequence is that of Parvalbumin beta 3 from Merluccius gayi (South Pacific hake).